The chain runs to 280 residues: 30 kDa immediate-early protein 2 (280 aa).

The disordered stretch occupies residues 36-164 (SEEEQGEEVE…KKSKRISELD (129 aa)). 3 stretches are compositionally biased toward low complexity: residues 47 to 67 (RGATASSPSTGSGTPRVTSPT), 90 to 101 (SSSSSSCSSASD), and 132 to 147 (AASSSLLSCGHQSSGG).

Functionally, activates the E1.7 promoter. This activation is augmented by the IE1 protein. It down-regulates the transcription of genes under the control of the major IE promoter. This chain is 30 kDa immediate-early protein 2 (UL122), found in Human cytomegalovirus (strain Towne) (HHV-5).